We begin with the raw amino-acid sequence, 260 residues long: Thaumatin-like protein 1 (260 aa).

Residues 1-32 (MIITVLHSHVSFYFIILSFLFFHALHLVGSDG) form the signal peptide. Intrachain disulfides connect cysteine 41-cysteine 255, cysteine 89-cysteine 100, cysteine 105-cysteine 112, cysteine 166-cysteine 245, cysteine 171-cysteine 228, cysteine 179-cysteine 191, cysteine 195-cysteine 204, and cysteine 205-cysteine 215.

This sequence belongs to the thaumatin family. In terms of tissue distribution, expressed only in roots.

In terms of biological role, involved in local responses of roots to colonization by non-pathogenic plant growth-promoting rhizobacteria (PGPR) fluorescent Pseudomonas spp., but seems to not being required for the establishment of subsequent induced systemic resistance (ISR). This Arabidopsis thaliana (Mouse-ear cress) protein is Thaumatin-like protein 1.